The primary structure comprises 463 residues: L-seryl-tRNA(Sec) selenium transferase (463 aa).

Position 295 is an N6-(pyridoxal phosphate)lysine (Lys295).

It belongs to the SelA family. As to quaternary structure, homodecamer; pentamer of dimers. Binds only one seryl-tRNA(Sec) per dimer. It depends on pyridoxal 5'-phosphate as a cofactor.

It localises to the cytoplasm. It carries out the reaction L-seryl-tRNA(Sec) + selenophosphate + H(+) = L-selenocysteinyl-tRNA(Sec) + phosphate. Its pathway is aminoacyl-tRNA biosynthesis; selenocysteinyl-tRNA(Sec) biosynthesis; selenocysteinyl-tRNA(Sec) from L-seryl-tRNA(Sec) (bacterial route): step 1/1. Functionally, converts seryl-tRNA(Sec) to selenocysteinyl-tRNA(Sec) required for selenoprotein biosynthesis. The chain is L-seryl-tRNA(Sec) selenium transferase from Photorhabdus laumondii subsp. laumondii (strain DSM 15139 / CIP 105565 / TT01) (Photorhabdus luminescens subsp. laumondii).